The primary structure comprises 265 residues: Regulator of calcineurin 2 (265 aa).

Phosphoserine occurs at positions 104 and 110. 2 disordered regions span residues 127 to 213 (LLSI…DKSA) and 242 to 265 (ENDVNATASNPPKSPSITVNEFFH). At Thr132 the chain carries Phosphothreonine. 2 stretches are compositionally biased toward low complexity: residues 141-161 (SSSLNKGGSSLSPDKSSLESP) and 182-202 (LSRSSSSTSNLSLNRSSQTSL). Residues Ser152, Ser157, Ser160, Ser183, Ser187, Ser193, Ser201, and Ser255 each carry the phosphoserine modification.

Post-translationally, phosphorylation of Ser-152 and Ser-160 is induced 2-fold in response to mating pheromone.

Its subcellular location is the cytoplasm. The protein is Regulator of calcineurin 2 (RCN2) of Saccharomyces cerevisiae (strain ATCC 204508 / S288c) (Baker's yeast).